The sequence spans 340 residues: Alpha-1,3-galactosyltransferase 2 (340 aa).

Residues 1-12 (MALKEGLRAWKR) lie on the Cytoplasmic side of the membrane. The helical; Signal-anchor for type II membrane protein transmembrane segment at 13 to 32 (IFWRQILLTLGLLGLFLYGL) threads the bilayer. Topologically, residues 33 to 340 (PKFRHLEALI…APKGYRLLRN (308 aa)) are lumenal. Asn58 and Asn100 each carry an N-linked (GlcNAc...) asparagine glycan. Asp199 and Asp201 together coordinate Mn(2+).

It belongs to the glycosyltransferase 6 family. Mn(2+) serves as cofactor. Expressed in thymus and monocyte derived dendritic cells.

The protein localises to the golgi apparatus. The protein resides in the golgi stack membrane. It carries out the reaction a beta-D-galactosyl-(1-&gt;4)-N-acetyl-beta-D-glucosaminyl derivative + UDP-alpha-D-galactose = an alpha-D-galactosyl-(1-&gt;3)-beta-D-galactosyl-(1-&gt;4)-N-acetyl-beta-D-glucosaminyl derivative + UDP + H(+). The enzyme catalyses a beta-D-Gal-(1-&gt;4)-beta-D-Glc-(1&lt;-&gt;1)-Cer(d18:1(4E)) + UDP-alpha-D-galactose = an isogloboside iGb3Cer (d18:1(4E)) + UDP + H(+). It catalyses the reaction a globoside Gb3Cer + UDP-alpha-D-galactose = a globoside GalGb3Cer + UDP + H(+). Synthesizes the galactose-alpha(1,3)-galactose group on the glycosphingolipid isoglobotrihexosylceramide or isogloboside 3 (iGb3) by catalyzing the transfer of galactose from UDP-Galactose to its acceptor molecule Gal-beta-1,4-Glc-ceramide. Can also catalyze the addition of galactose to iGb3 itself to form polygalactose structures. This is Alpha-1,3-galactosyltransferase 2 from Homo sapiens (Human).